We begin with the raw amino-acid sequence, 334 residues long: Glycerol-1-phosphate dehydrogenase [NAD(P)+] (334 aa).

Residues 77–81 (GRPID) and 99–102 (TTAS) each bind NAD(+). D104 serves as a coordination point for substrate. Residue S108 participates in NAD(+) binding. D147 lines the substrate pocket. Zn(2+) is bound by residues D147 and H225. H229 lines the substrate pocket. H246 serves as a coordination point for Zn(2+).

It belongs to the glycerol-1-phosphate dehydrogenase family. It depends on Zn(2+) as a cofactor.

It localises to the cytoplasm. It carries out the reaction sn-glycerol 1-phosphate + NAD(+) = dihydroxyacetone phosphate + NADH + H(+). The catalysed reaction is sn-glycerol 1-phosphate + NADP(+) = dihydroxyacetone phosphate + NADPH + H(+). It functions in the pathway membrane lipid metabolism; glycerophospholipid metabolism. Functionally, catalyzes the NAD(P)H-dependent reduction of dihydroxyacetonephosphate (DHAP or glycerone phosphate) to glycerol 1-phosphate (G1P). The G1P thus generated is used as the glycerophosphate backbone of phospholipids in the cellular membranes of Archaea. The sequence is that of Glycerol-1-phosphate dehydrogenase [NAD(P)+] from Methanococcus maripaludis (strain C6 / ATCC BAA-1332).